The chain runs to 224 residues: Fibronectin type III domain-containing protein 9 (224 aa).

Positions 1–101 (MNIEVGNISY…FHTLDKSPLA (101 aa)) constitute a Fibronectin type-III domain. A helical transmembrane segment spans residues 113 to 133 (LWVLMAILLACFTAVLAFICL). The segment at 175-224 (LQGLPLVEMPRKNSRDGAELDPEANQDAPDAGALQRGGGDPPAILPHCGE) is disordered. A compositionally biased stretch (basic and acidic residues) spans 183-192 (MPRKNSRDGA).

The protein resides in the membrane. In Homo sapiens (Human), this protein is Fibronectin type III domain-containing protein 9 (FNDC9).